A 511-amino-acid chain; its full sequence is Tyrosine--tRNA ligase, chloroplastic/mitochondrial (511 aa).

Residue Y118 participates in L-tyrosine binding. D122 contacts ATP. A 'HIGH' region motif is present at residues 123–132 (PTAESLHLGN). Positions 162, 256, 260, 263, and 282 each coordinate L-tyrosine. Positions 318–322 (KFGKS) match the 'KMSKS' region motif. K321 contacts ATP. An S4 RNA-binding domain is found at 444-510 (LSIVDLSVSA…GKKNKVVVRI (67 aa)).

It belongs to the class-I aminoacyl-tRNA synthetase family.

It is found in the plastid. The protein localises to the chloroplast. It localises to the mitochondrion. It carries out the reaction tRNA(Tyr) + L-tyrosine + ATP = L-tyrosyl-tRNA(Tyr) + AMP + diphosphate + H(+). In terms of biological role, catalyzes the attachment of tyrosine to tRNA(Tyr) in a two-step reaction: tyrosine is first activated by ATP to form Tyr-AMP and then transferred to the acceptor end of tRNA(Tyr). This Arabidopsis thaliana (Mouse-ear cress) protein is Tyrosine--tRNA ligase, chloroplastic/mitochondrial.